The chain runs to 180 residues: Probable RNA 2'-phosphotransferase (180 aa).

Belongs to the KptA/TPT1 family.

Its function is as follows. Removes the 2'-phosphate from RNA via an intermediate in which the phosphate is ADP-ribosylated by NAD followed by a presumed transesterification to release the RNA and generate ADP-ribose 1''-2''-cyclic phosphate (APPR&gt;P). May function as an ADP-ribosylase. The polypeptide is Probable RNA 2'-phosphotransferase (Thermococcus kodakarensis (strain ATCC BAA-918 / JCM 12380 / KOD1) (Pyrococcus kodakaraensis (strain KOD1))).